Here is an 803-residue protein sequence, read N- to C-terminus: Phenylalanine--tRNA ligase beta subunit (803 aa).

The tRNA-binding domain occupies alanine 40 to alanine 153. The B5 domain occupies alanine 400–serine 476. The Mg(2+) site is built by aspartate 454, aspartate 460, glutamate 463, and glutamate 464. The 93-residue stretch at serine 709 to arginine 801 folds into the FDX-ACB domain.

The protein belongs to the phenylalanyl-tRNA synthetase beta subunit family. Type 1 subfamily. As to quaternary structure, tetramer of two alpha and two beta subunits. Mg(2+) serves as cofactor.

It localises to the cytoplasm. It catalyses the reaction tRNA(Phe) + L-phenylalanine + ATP = L-phenylalanyl-tRNA(Phe) + AMP + diphosphate + H(+). The polypeptide is Phenylalanine--tRNA ligase beta subunit (Chlorobium chlorochromatii (strain CaD3)).